We begin with the raw amino-acid sequence, 434 residues long: Sulfide-quinone reductase (434 aa).

FAD is bound by residues G8–G12, S34–A35, and S77–A78. The active-site Cysteine persulfide intermediate is C160. Residues I302 and G322 each contribute to the FAD site. Residue C356 is the Cysteine persulfide intermediate of the active site. K391 provides a ligand contact to FAD.

This sequence belongs to the SQRD family. In terms of assembly, homodimer. FAD serves as cofactor.

The protein resides in the membrane. It carries out the reaction n a quinone + n hydrogen sulfide + n H(+) = polysulfur(n-2) + n a quinol. Its function is as follows. Catalyzes the oxidation of hydrogen sulfide, with the help of a quinone. Consecutive reaction cycles lead to the accumulation of a polysulfide product on the active site Cys residues; these products are released when they exceed a critical length, typically as cyclooctasulfur. The chain is Sulfide-quinone reductase from Acidithiobacillus ferrooxidans (strain ATCC 23270 / DSM 14882 / CIP 104768 / NCIMB 8455) (Ferrobacillus ferrooxidans (strain ATCC 23270)).